Here is a 313-residue protein sequence, read N- to C-terminus: Carbamate kinase 2 (313 aa).

Belongs to the carbamate kinase family.

The protein resides in the cytoplasm. The catalysed reaction is hydrogencarbonate + NH4(+) + ATP = carbamoyl phosphate + ADP + H2O + H(+). It functions in the pathway metabolic intermediate metabolism; carbamoyl phosphate degradation; CO(2) and NH(3) from carbamoyl phosphate: step 1/1. The sequence is that of Carbamate kinase 2 (arcC2) from Staphylococcus aureus (strain bovine RF122 / ET3-1).